The following is a 286-amino-acid chain: Bifunctional protein FolD (286 aa).

Residues 167 to 169 and I233 contribute to the NADP(+) site; that span reads GRS.

The protein belongs to the tetrahydrofolate dehydrogenase/cyclohydrolase family. Homodimer.

The catalysed reaction is (6R)-5,10-methylene-5,6,7,8-tetrahydrofolate + NADP(+) = (6R)-5,10-methenyltetrahydrofolate + NADPH. It catalyses the reaction (6R)-5,10-methenyltetrahydrofolate + H2O = (6R)-10-formyltetrahydrofolate + H(+). Its pathway is one-carbon metabolism; tetrahydrofolate interconversion. Functionally, catalyzes the oxidation of 5,10-methylenetetrahydrofolate to 5,10-methenyltetrahydrofolate and then the hydrolysis of 5,10-methenyltetrahydrofolate to 10-formyltetrahydrofolate. The chain is Bifunctional protein FolD from Limosilactobacillus reuteri (strain DSM 20016) (Lactobacillus reuteri).